Consider the following 289-residue polypeptide: Polyketide biosynthesis malonyl CoA-acyl carrier protein transacylase BaeC (289 aa).

Catalysis depends on residues Ser-87 and His-193.

The protein belongs to the FabD family.

The protein resides in the cytoplasm. It catalyses the reaction holo-[ACP] + malonyl-CoA = malonyl-[ACP] + CoA. It participates in antibiotic biosynthesis; bacillaene biosynthesis. Involved in some intermediate steps for the synthesis of the antibiotic polyketide bacillaene which is involved in secondary metabolism. It catalyzes the transfer of the malonyl-CoA group to the acyl-carrier-protein AcpK (Mal-AcpK). The sequence is that of Polyketide biosynthesis malonyl CoA-acyl carrier protein transacylase BaeC (baeC) from Bacillus velezensis (strain DSM 23117 / BGSC 10A6 / LMG 26770 / FZB42) (Bacillus amyloliquefaciens subsp. plantarum).